Here is a 1184-residue protein sequence, read N- to C-terminus: C5a peptidase (1184 aa).

An N-terminal signal peptide occupies residues 1–31 (MRKKQKLPFDKLAIALMSTSILLNAQSDIKA). Polar residues-rich tracts occupy residues 33-52 (TVTE…QPTA) and 89-100 (AKTTDTPATSKA). The tract at residues 33 to 117 (TVTEDTPATE…PSQVKTLQEK (85 aa)) is disordered. Positions 99–581 (KATIRDLNDP…AGAVDAKKAS (483 aa)) constitute a Peptidase S8 domain. Active-site charge relay system residues include Asp130, His193, and Ser512. Composition is skewed to basic and acidic residues over residues 1029–1054 (EGHS…KPEQ), 1061–1071 (PDKKPETKPEQ), 1078–1088 (PDKKPEAKPEQ), and 1095–1107 (PDKK…EKDS). Residues 1029–1150 (EGHSNKPEQD…RDQLPTTNDK (122 aa)) are disordered. 4 consecutive repeat copies span residues 1034-1067 (KPEQ…KPET), 1068-1084 (KPEQ…KPEA), 1085-1101 (KPEQ…KPET), and 1102-1118 (KPEK…TPQK). The interval 1034-1118 (KPEQDGSDQV…GQTPGKTPQK (85 aa)) is 4 X 17 AA tandem repeats. The segment covering 1109–1123 (GQTPGKTPQKGQPSR) has biased composition (polar residues). Positions 1144–1148 (LPTTN) match the LPXTG sorting signal motif. Pentaglycyl murein peptidoglycan amidated threonine is present on Thr1147. A propeptide spans 1148-1184 (NDKDTNRLHLLKLVMTTFFFGLVAHIFKTKRQKETKK) (removed by sortase).

It belongs to the peptidase S8 family. Cleaved by SpeB protease; leading to its degradation. Degradation by SpeB is probably strictly regulated to preserve integrity of C5a peptidase.

It localises to the secreted. Its subcellular location is the cell wall. It carries out the reaction The primary cleavage site is at 67-His-|-Lys-68 in human C5a with a minor secondary cleavage site at 58-Ala-|-Ser-59.. This virulence factor of S.pyogenes specifically cleaves the human serum chemotaxin C5a at '68-Lys-|-Asp-69' bond near its C-terminus, destroying its ability to serve as a chemoattractant. This Streptococcus pyogenes serotype M6 (strain ATCC BAA-946 / MGAS10394) protein is C5a peptidase (scpA).